A 1075-amino-acid polypeptide reads, in one-letter code: MLKPQPLQQPSQPQQPPPTQQAVARRPPGGTSPPNGGLPGPLATSAAPPGPPAAASPCLGPVAAAGSGLRRGAEGILAPQPPPPQQHQERPGAAAIGSARGQSTGKGPPQSPVFEGVYNNSRMLHFLTAVVGSTCDVKVKNGTTYEGIFKTLSSKFELAVDAVHRKASEPAGGPRREDIVDTMVFKPSDVMLVHFRNVDFNYATKDKFTDSAIAMNSKVNGEHKEKVLQRWEGGDSNSDDYDLESDMSNGWDPNEMFKFNEENYGVKTTYDSSLSSYTVPLEKDNSEEFRQRELRAAQLAREIESSPQYRLRIAMENDDGRTEEEKHSAVQRQGSGRESPSLASREGKYIPLPQRVREGPRGGVRCSSSRGGRPGLSSLPPRGPHHLDNSSPGPGSEARGINGGPSRMSPKAQRPLRGAKTLSSPSNRPSGETSVPPPPAVGRMYPPRSPKSAAPAPISASCPEPPIGSAVPTSSASIPVTSSVSDPGVGSISPASPKISLAPTDVKELSTKEPGRTLEPQELARIAGKVPGLQNEQKRFQLEELRKFGAQFKLQPSSSPENSLDPFPPRILKEEPKGKEKEVDGLLTSEPMGSPVSSKTESVSDKEDKPPLAPSGGTEGPEQPPPPCPSQTGSPPVGLIKGEDKDEGPVAEQVKKSTLNPNAKEFNPTKPLLSVNKSTSTPTSPGPRTHSTPSIPVLTAGQSGLYSPQYISYIPQIHMGPAVQAPQMYPYPVSNSVPGQQGKYRGAKGSLPPQRSDQHQPASAPPMMQAAAAAGPPLVAATPYSSYIPYNPQQFPGQPAMMQPMAHYPSQPVFAPMLQSNPRMLTSGSHPQAIVSSSTPQYPSAEQPTPQALYATVHQSYPHHATQLHAHQPQPATTPTGSQPQSQHAAPSPVQHQAGQAPHLGSGQPQQNLYHPGALTGTPPSLPPGPSAQSPQSSFPQPAAVYAIHHQQLPHGFTNMAHVTQAHVQTGITAAPPPHPGAPHPPQVMLLHPPQSHGGPPQGAVPQSGVPALSASTPSPYPYIGHPQGEQPGQAPGFPGGADDRIREFSLAGGIWHGRAEGLQVGQDARVLGGE.

Met1 is subject to N-acetylmethionine. Over residues 1 to 12 (MLKPQPLQQPSQ) the composition is skewed to low complexity. A disordered region spans residues 1–115 (MLKPQPLQQP…KGPPQSPVFE (115 aa)). The interaction with MPL stretch occupies residues 98 to 121 (SARGQSTGKGPPQSPVFEGVYNNS). Phosphoserine is present on residues Ser103 and Ser111. Tyr118 is modified (phosphotyrosine). Positions 122 to 199 (RMLHFLTAVV…VMLVHFRNVD (78 aa)) constitute a Sm domain. Lys207 carries the N6-acetyllysine modification. At Ser238 the chain carries Phosphoserine. Tyr264 is subject to Phosphotyrosine. Residue Ser306 is modified to Phosphoserine. Residue Tyr309 is modified to Phosphotyrosine. Positions 316–328 (ENDDGRTEEEKHS) are enriched in basic and acidic residues. Disordered regions lie at residues 316 to 521 (ENDD…LEPQ), 551 to 697 (QFKL…SIPV), 733 to 770 (VSNS…MMQA), 820 to 849 (SNPR…EQPT), 865 to 940 (ATQL…SSFP), and 1022 to 1045 (PYIG…ADDR). Polar residues predominate over residues 330 to 342 (VQRQGSGRESPSL). A phosphoserine mark is found at Ser335 and Ser339. A Glycyl lysine isopeptide (Lys-Gly) (interchain with G-Cter in SUMO2) cross-link involves residue Lys348. Tyr349 carries the phosphotyrosine modification. The residue at position 361 (Arg361) is an Asymmetric dimethylarginine. The span at 363 to 380 (GVRCSSSRGGRPGLSSLP) shows a compositional bias: low complexity. Residues Ser391 and Ser409 each carry the phosphoserine modification. The span at 421–433 (TLSSPSNRPSGET) shows a compositional bias: polar residues. Ser449 is modified (phosphoserine). 2 stretches are compositionally biased toward low complexity: residues 450-462 (PKSA…SASC) and 471-485 (VPTS…SSVS). Phosphoserine is present on residues Ser493 and Ser496. Residues 505–516 (DVKELSTKEPGR) show a composition bias toward basic and acidic residues. Residues Ser557, Ser558, Ser559, and Ser563 each carry the phosphoserine modification. The span at 571–584 (ILKEEPKGKEKEVD) shows a compositional bias: basic and acidic residues. A Phosphoserine modification is found at Ser594. The residue at position 632 (Thr632) is a Phosphothreonine. Phosphoserine occurs at positions 634, 674, 680, and 684. Low complexity-rich tracts occupy residues 678-694 (STST…STPS) and 761-770 (PASAPPMMQA). Residues 874–898 (QPATTPTGSQPQSQHAAPSPVQHQA) show a composition bias toward polar residues. Composition is skewed to low complexity over residues 931-940 (SAQSPQSSFP) and 1025-1037 (GHPQ…QAPG).

It belongs to the ataxin-2 family. As to quaternary structure, interacts with MPL/TPOR and EPOR and dissociates after ligand stimulation. Interacts with DDX6, G3BP1, and ATXN2. Interacts with PRMT1. Interacts with CIC and ATXN1. Post-translationally, thrombopoietin triggers the phosphorylation on tyrosine residues in a way that is dependent on MPL C-terminal domain. Asymmetrically dimethylated. Probably methylated by PRMT1. As to expression, expressed at high levels in thymus, lymph node, spleen, fetal kidney and adult testis. Constitutively associated with MPL and EPOR in hematopoietic cells.

The protein localises to the membrane. The protein resides in the cytoplasm. Its subcellular location is the nucleus speckle. It is found in the cytoplasmic granule. Its function is as follows. Involved in the regulation of stress granule and P-body formation. This is Ataxin-2-like protein (ATXN2L) from Homo sapiens (Human).